A 430-amino-acid chain; its full sequence is Histone acetyltransferase type B subunit 2 (430 aa).

WD repeat units lie at residues 129–169 (PHDG…ALTT), 180–220 (GHTA…FTSS), 233–273 (RHTD…EEEA), 279–319 (AHSK…QRLH), and 323–363 (GHED…EEQT). The interaction with the histone H4 N-terminus stretch occupies residues 365–369 (EDAED). The WD 6 repeat unit spans residues 380–420 (GHTNRISEFSWCPNERWVVGSLADDNILQIWSPSRVIWGRD). Phosphoserine is present on Ser-425.

Belongs to the WD repeat RBAP46/RBAP48/MSI1 family. Component of the HAT-B complex composed of at least hat1 and hat2. The HAT-B complex binds to histone H4 tail. Component of the CENP-A recruiting complex composed of at least mis16, mis19, mis19 and mis20.

It is found in the cytoplasm. The protein resides in the nucleus. It localises to the chromosome. Its subcellular location is the centromere. The protein localises to the kinetochore. Functionally, regulatory subunit of the histone acetylase B (HAT-B) complex. The complex acetylates 'Lys-12' of histone H4 which is required for telomeric silencing. Component of the CENP-A recruiting complex that ensures the integrity of mitotic spindles through maintenance of kinetochore factors mis6/CENP-I and cnp1/CENP-A. Maintains the deacetylated state of histones specifically in the central core of the centromeres. In Schizosaccharomyces pombe (strain 972 / ATCC 24843) (Fission yeast), this protein is Histone acetyltransferase type B subunit 2 (mis16).